Reading from the N-terminus, the 219-residue chain is 2-hydroxy-3-keto-5-methylthiopentenyl-1-phosphate phosphatase (219 aa).

Belongs to the HAD-like hydrolase superfamily. MtnX family.

The catalysed reaction is 2-hydroxy-5-methylsulfanyl-3-oxopent-1-enyl phosphate + H2O = 1,2-dihydroxy-5-(methylsulfanyl)pent-1-en-3-one + phosphate. It functions in the pathway amino-acid biosynthesis; L-methionine biosynthesis via salvage pathway; L-methionine from S-methyl-5-thio-alpha-D-ribose 1-phosphate: step 4/6. In terms of biological role, dephosphorylates 2-hydroxy-3-keto-5-methylthiopentenyl-1-phosphate (HK-MTPenyl-1-P) yielding 1,2-dihydroxy-3-keto-5-methylthiopentene (DHK-MTPene). The sequence is that of 2-hydroxy-3-keto-5-methylthiopentenyl-1-phosphate phosphatase from Bacillus mycoides (strain KBAB4) (Bacillus weihenstephanensis).